The sequence spans 295 residues: Translational activator of cytochrome c oxidase 1 (295 aa).

The residue at position 162 (lysine 162) is an N6-acetyllysine. A coiled-coil region spans residues 190-225 (VEDREKKAVNLERALELAIEAGAEDVREAEDEEEEK).

The protein belongs to the TACO1 family.

It is found in the mitochondrion. Its function is as follows. Acts as a translational activator of mitochondrially-encoded cytochrome c oxidase 1. The polypeptide is Translational activator of cytochrome c oxidase 1 (Rattus norvegicus (Rat)).